The sequence spans 398 residues: Protein ELC (398 aa).

The UEV domain occupies 18–162 (ALSQRGPSSV…ARDPPLYSRR (145 aa)). The interval 157–202 (PLYSRRRPQPPPPSPPTVYDSSLSRPPSADQSLPRPFPPSPYGGGV) is disordered. Residues 175-187 (YDSSLSRPPSADQ) are compositionally biased toward polar residues. A coiled-coil region spans residues 247–291 (EAEAEELLSLQAGLKRREDELNIGLKEMVEEKETLEQQLQIISMN). Positions 322–390 (DTLSKQMLEC…RAAQMEVQVA (69 aa)) constitute an SB domain.

It belongs to the ubiquitin-conjugating enzyme family. UEV subfamily. As to quaternary structure, component of the endosomal sorting required for transport complex I (ESCRT-I), composed of ELC, VPS28 and VPS37. Interacts with VPS28 and VPS37. Binds ubiquitin in vitro. Interacts with FREE1. Interacts with TOL9/TOM1D. Interacts with BRO1/ALIX. Interacts with SINAT1, SINAT2, SINAT3 and SINAT4. In terms of processing, ubiquitinated by SINAT1, SINAT2, SINAT3 and SINAT4 for subsequent proteasomal degradation. As to expression, expressed in roots, stems, leaves and flowers.

The protein resides in the early endosome. It localises to the late endosome. Its subcellular location is the prevacuolar compartment. Its function is as follows. Component of the ESCRT-I complex (endosomal sorting complex required for transport I), a regulator of vesicular trafficking process. Required for the sorting of endocytic ubiquitinated cargos into multivesicular bodies (MVBs). May control nuclear division through the microtubule cytoskeleton. This chain is Protein ELC, found in Arabidopsis thaliana (Mouse-ear cress).